Here is a 322-residue protein sequence, read N- to C-terminus: Lipoyl synthase (322 aa).

[4Fe-4S] cluster-binding residues include Cys-69, Cys-74, Cys-80, Cys-95, Cys-99, Cys-102, and Ser-309. The 218-residue stretch at 81-298 (FNHGTATFMI…KEIALELGFT (218 aa)) folds into the Radical SAM core domain.

The protein belongs to the radical SAM superfamily. Lipoyl synthase family. It depends on [4Fe-4S] cluster as a cofactor.

Its subcellular location is the cytoplasm. It carries out the reaction [[Fe-S] cluster scaffold protein carrying a second [4Fe-4S](2+) cluster] + N(6)-octanoyl-L-lysyl-[protein] + 2 oxidized [2Fe-2S]-[ferredoxin] + 2 S-adenosyl-L-methionine + 4 H(+) = [[Fe-S] cluster scaffold protein] + N(6)-[(R)-dihydrolipoyl]-L-lysyl-[protein] + 4 Fe(3+) + 2 hydrogen sulfide + 2 5'-deoxyadenosine + 2 L-methionine + 2 reduced [2Fe-2S]-[ferredoxin]. Its pathway is protein modification; protein lipoylation via endogenous pathway; protein N(6)-(lipoyl)lysine from octanoyl-[acyl-carrier-protein]: step 2/2. Its function is as follows. Catalyzes the radical-mediated insertion of two sulfur atoms into the C-6 and C-8 positions of the octanoyl moiety bound to the lipoyl domains of lipoate-dependent enzymes, thereby converting the octanoylated domains into lipoylated derivatives. This chain is Lipoyl synthase, found in Photobacterium profundum (strain SS9).